The following is a 332-amino-acid chain: Holliday junction branch migration complex subunit RuvB (332 aa).

Residues 1–181 form a large ATPase domain (RuvB-L) region; that stretch reads MSRILDNEIM…FGITGHMEYY (181 aa). Residues Leu-20, Arg-21, Gly-62, Lys-65, Thr-66, Thr-67, 128–130, Arg-171, Tyr-181, and Arg-218 contribute to the ATP site; that span reads EDF. Thr-66 is a Mg(2+) binding site. Positions 182–252 are small ATPAse domain (RuvB-S); the sequence is AHADLTEIVE…ITDKALTMLD (71 aa). The head domain (RuvB-H) stretch occupies residues 255–332; it reads HEGLDYVDQK…EHLGYEYSEK (78 aa). Residues Arg-291, Arg-310, Arg-312, and Arg-315 each coordinate DNA.

Belongs to the RuvB family. Homohexamer. Forms an RuvA(8)-RuvB(12)-Holliday junction (HJ) complex. HJ DNA is sandwiched between 2 RuvA tetramers; dsDNA enters through RuvA and exits via RuvB. An RuvB hexamer assembles on each DNA strand where it exits the tetramer. Each RuvB hexamer is contacted by two RuvA subunits (via domain III) on 2 adjacent RuvB subunits; this complex drives branch migration. In the full resolvosome a probable DNA-RuvA(4)-RuvB(12)-RuvC(2) complex forms which resolves the HJ.

The protein localises to the cytoplasm. The enzyme catalyses ATP + H2O = ADP + phosphate + H(+). In terms of biological role, the RuvA-RuvB-RuvC complex processes Holliday junction (HJ) DNA during genetic recombination and DNA repair, while the RuvA-RuvB complex plays an important role in the rescue of blocked DNA replication forks via replication fork reversal (RFR). RuvA specifically binds to HJ cruciform DNA, conferring on it an open structure. The RuvB hexamer acts as an ATP-dependent pump, pulling dsDNA into and through the RuvAB complex. RuvB forms 2 homohexamers on either side of HJ DNA bound by 1 or 2 RuvA tetramers; 4 subunits per hexamer contact DNA at a time. Coordinated motions by a converter formed by DNA-disengaged RuvB subunits stimulates ATP hydrolysis and nucleotide exchange. Immobilization of the converter enables RuvB to convert the ATP-contained energy into a lever motion, pulling 2 nucleotides of DNA out of the RuvA tetramer per ATP hydrolyzed, thus driving DNA branch migration. The RuvB motors rotate together with the DNA substrate, which together with the progressing nucleotide cycle form the mechanistic basis for DNA recombination by continuous HJ branch migration. Branch migration allows RuvC to scan DNA until it finds its consensus sequence, where it cleaves and resolves cruciform DNA. The protein is Holliday junction branch migration complex subunit RuvB of Streptococcus pneumoniae serotype 2 (strain D39 / NCTC 7466).